We begin with the raw amino-acid sequence, 167 residues long: NAD(P)H-quinone oxidoreductase subunit I, chloroplastic (167 aa).

4Fe-4S ferredoxin-type domains are found at residues 55 to 84 (GRIHFEFDKCIACEVCVRVCPIDLPVVDWK) and 95 to 124 (LNYSIDFGICIFCGNCVEYCPTNCLSMTEE). [4Fe-4S] cluster contacts are provided by Cys64, Cys67, Cys70, Cys74, Cys104, Cys107, Cys110, and Cys114.

It belongs to the complex I 23 kDa subunit family. NDH is composed of at least 16 different subunits, 5 of which are encoded in the nucleus. [4Fe-4S] cluster serves as cofactor.

The protein localises to the plastid. It localises to the chloroplast thylakoid membrane. The catalysed reaction is a plastoquinone + NADH + (n+1) H(+)(in) = a plastoquinol + NAD(+) + n H(+)(out). It catalyses the reaction a plastoquinone + NADPH + (n+1) H(+)(in) = a plastoquinol + NADP(+) + n H(+)(out). In terms of biological role, NDH shuttles electrons from NAD(P)H:plastoquinone, via FMN and iron-sulfur (Fe-S) centers, to quinones in the photosynthetic chain and possibly in a chloroplast respiratory chain. The immediate electron acceptor for the enzyme in this species is believed to be plastoquinone. Couples the redox reaction to proton translocation, and thus conserves the redox energy in a proton gradient. The polypeptide is NAD(P)H-quinone oxidoreductase subunit I, chloroplastic (Vitis vinifera (Grape)).